The primary structure comprises 87 residues: UPF0235 protein TGRD_618 (87 aa).

Belongs to the UPF0235 family.

In Endomicrobium trichonymphae, this protein is UPF0235 protein TGRD_618.